We begin with the raw amino-acid sequence, 300 residues long: Hydroxyquinol 1,2-dioxygenase (300 aa).

Fe cation contacts are provided by Tyr-167, Tyr-200, His-224, and His-226.

Belongs to the intradiol ring-cleavage dioxygenase family. The cofactor is Fe(3+).

It carries out the reaction benzene-1,2,4-triol + O2 = maleylacetate + 2 H(+). The protein operates within aromatic compound metabolism. It functions in the pathway xenobiotic degradation. Its function is as follows. Involved in the degradation of para-nitrophenol (4-NP). Catalyzes the conversion of hydroxyquinol to malelylacetate. The protein is Hydroxyquinol 1,2-dioxygenase (npcC) of Rhodococcus opacus (Nocardia opaca).